Here is a 442-residue protein sequence, read N- to C-terminus: uncharacterized protein (442 aa).

This is an uncharacterized protein from Sputnik virophage.